The primary structure comprises 1132 residues: Mis18-binding protein 1 (1132 aa).

Lys7 is covalently cross-linked (Glycyl lysine isopeptide (Lys-Gly) (interchain with G-Cter in SUMO2)). A Phosphoserine modification is found at Ser9. Lys65 participates in a covalent cross-link: Glycyl lysine isopeptide (Lys-Gly) (interchain with G-Cter in SUMO2). Residues Ser110, Ser131, Ser135, Ser172, and Ser192 each carry the phosphoserine modification. The tract at residues 123–154 is disordered; sequence LRDKQEQPSRNSSLLEPQKSGNNETFTPNRVE. Over residues 130 to 150 the composition is skewed to polar residues; the sequence is PSRNSSLLEPQKSGNNETFTP. Glycyl lysine isopeptide (Lys-Gly) (interchain with G-Cter in SUMO2) cross-links involve residues Lys211 and Lys262. Residue Ser299 is modified to Phosphoserine. The segment at 306–332 is disordered; the sequence is SERTTEGTSQQKVKEGNGKTVPGETGL. At Ser365 the chain carries Phosphoserine. An SANTA domain is found at 383–469; the sequence is VQLQEWMIKS…MFGFPENWKE (87 aa). A disordered region spans residues 482–518; that stretch reads EKNREKTKQKQKTGRSVRDIRKSMKNDARENQTDTAQ. Over residues 497 to 513 the composition is skewed to basic and acidic residues; it reads SVRDIRKSMKNDARENQ. Residues Lys534, Lys612, Lys639, and Lys647 each participate in a glycyl lysine isopeptide (Lys-Gly) (interchain with G-Cter in SUMO2) cross-link. Residue Thr653 is modified to Phosphothreonine. Glycyl lysine isopeptide (Lys-Gly) (interchain with G-Cter in SUMO2) cross-links involve residues Lys727 and Lys742. The segment at 765 to 798 is disordered; that stretch reads HQSSPDLSSEESETEKEIKRKAEVKKTKAGNTKE. A phosphoserine mark is found at Ser772 and Ser773. Positions 779-790 are enriched in basic and acidic residues; that stretch reads EKEIKRKAEVKK. Thr821 carries the post-translational modification Phosphothreonine. Phosphoserine is present on Ser824. Residue Lys840 forms a Glycyl lysine isopeptide (Lys-Gly) (interchain with G-Cter in SUMO2) linkage. Position 860 is a phosphoserine (Ser860). An SANT domain is found at 875-930; it reads IQDKEWNEKELQKLHCAFASLPKHKPGFWSEVAAAVGSRSPEECQRKYMENPRGKG. Lys899 is covalently cross-linked (Glycyl lysine isopeptide (Lys-Gly) (interchain with G-Cter in SUMO2)). Residues 923 to 957 are disordered; the sequence is MENPRGKGSQKHVTKKKPANSKGQNGKRGDADQKQ. Over residues 930 to 941 the composition is skewed to basic residues; sequence GSQKHVTKKKPA. Glycyl lysine isopeptide (Lys-Gly) (interchain with G-Cter in SUMO2) cross-links involve residues Lys956, Lys964, and Lys983. At Ser1008 the chain carries Phosphoserine. Lys1079 participates in a covalent cross-link: Glycyl lysine isopeptide (Lys-Gly) (interchain with G-Cter in SUMO2). At Ser1086 the chain carries Phosphoserine. Phosphothreonine is present on residues Thr1087 and Thr1089. Phosphoserine is present on residues Ser1104 and Ser1116.

In terms of assembly, interacts with SP1. Interacts with MIS18A. Identified in a complex containing MIS18A, OIP5/MIS18B, MIS18BP1, RBBP7 and RBBP4. Interacts with KAT7/HBO1. Interacts (via N-terminus) with FLNA (via N-terminus).

Its subcellular location is the nucleus. The protein localises to the chromosome. It localises to the centromere. Required for recruitment of CENPA to centromeres and normal chromosome segregation during mitosis. In Homo sapiens (Human), this protein is Mis18-binding protein 1 (MIS18BP1).